A 340-amino-acid chain; its full sequence is Nicotinate-nucleotide--dimethylbenzimidazole phosphoribosyltransferase (340 aa).

Glu-305 serves as the catalytic Proton acceptor.

This sequence belongs to the CobT family.

It carries out the reaction 5,6-dimethylbenzimidazole + nicotinate beta-D-ribonucleotide = alpha-ribazole 5'-phosphate + nicotinate + H(+). Its pathway is nucleoside biosynthesis; alpha-ribazole biosynthesis; alpha-ribazole from 5,6-dimethylbenzimidazole: step 1/2. Catalyzes the synthesis of alpha-ribazole-5'-phosphate from nicotinate mononucleotide (NAMN) and 5,6-dimethylbenzimidazole (DMB). The polypeptide is Nicotinate-nucleotide--dimethylbenzimidazole phosphoribosyltransferase (Allorhizobium ampelinum (strain ATCC BAA-846 / DSM 112012 / S4) (Agrobacterium vitis (strain S4))).